Consider the following 189-residue polypeptide: Protein GrpE (189 aa).

Over residues 1–14 (MTEKNEEVVEDKNI) the composition is skewed to basic and acidic residues. The interval 1-38 (MTEKNEEVVEDKNISDQTDENLTEEIESEADDLQVEPD) is disordered. Residues 17-35 (QTDENLTEEIESEADDLQV) are compositionally biased toward acidic residues.

It belongs to the GrpE family. Homodimer.

It is found in the cytoplasm. Participates actively in the response to hyperosmotic and heat shock by preventing the aggregation of stress-denatured proteins, in association with DnaK and GrpE. It is the nucleotide exchange factor for DnaK and may function as a thermosensor. Unfolded proteins bind initially to DnaJ; upon interaction with the DnaJ-bound protein, DnaK hydrolyzes its bound ATP, resulting in the formation of a stable complex. GrpE releases ADP from DnaK; ATP binding to DnaK triggers the release of the substrate protein, thus completing the reaction cycle. Several rounds of ATP-dependent interactions between DnaJ, DnaK and GrpE are required for fully efficient folding. The sequence is that of Protein GrpE from Leuconostoc mesenteroides subsp. mesenteroides (strain ATCC 8293 / DSM 20343 / BCRC 11652 / CCM 1803 / JCM 6124 / NCDO 523 / NBRC 100496 / NCIMB 8023 / NCTC 12954 / NRRL B-1118 / 37Y).